We begin with the raw amino-acid sequence, 300 residues long: Formate dehydrogenase-O iron-sulfur subunit (300 aa).

The Cytoplasmic portion of the chain corresponds to 1–260; it reads MAYQSQDIIR…KFWKGIWKPL (260 aa). 4Fe-4S ferredoxin-type domains follow at residues 30 to 60, 91 to 123, 124 to 153, and 158 to 189; these read VAKLIDVTTCIGCKACQVACSEWNDIRDTVG, LEWLIRKDGCMHCSDPGCLKACPAEGAIIQYAN, GIVDFQSEQCIGCGYCIAGCPFDIPRLNPE, and YKCTLCVDRVVVGQEPACVKTCPTGAIHFGTK. Positions 39, 42, 45, 49, 100, 103, 108, 112, 133, 136, 139, 143, 160, 163, 175, and 179 each coordinate [4Fe-4S] cluster. The chain crosses the membrane as a helical span at residues 261-279; it reads AAVGFAATFAASIFHYVGV. Over 280 to 300 the chain is Periplasmic; it reads GPNRADEEENNLHEEKDEERK.

As to quaternary structure, formate dehydrogenase is a membrane-bound complex, formed by subunits alpha, beta and gamma. [4Fe-4S] cluster is required as a cofactor.

Its subcellular location is the cell membrane. Functionally, allows to use formate as major electron donor during aerobic respiration. The beta chain is an electron transfer unit containing 4 cysteine clusters involved in the formation of iron-sulfur centers. Electrons are transferred from the gamma chain to the molybdenum cofactor of the alpha subunit. This chain is Formate dehydrogenase-O iron-sulfur subunit (fdoH), found in Escherichia coli (strain K12).